Consider the following 354-residue polypeptide: Rhodopsin (354 aa).

Residues 1 to 36 (MNGTEGPNFYIPMSNKTGVVRSPFEYPQYYLAEPWK) are Extracellular-facing. N-linked (GlcNAc...) asparagine glycosylation is found at asparagine 2 and asparagine 15. Residues 37-61 (YSILAAYMFLLILLGFPINFMTLYV) form a helical membrane-spanning segment. The Cytoplasmic segment spans residues 62 to 73 (TIQHKKLRTPLN). The helical transmembrane segment at 74 to 96 (YILLNLAFANHFMVLCGFTITLY) threads the bilayer. The Extracellular portion of the chain corresponds to 97–110 (TSLHGYFVFGQSGC). An intrachain disulfide couples cysteine 110 to cysteine 187. Residues 111 to 133 (YFEGFFATLGGEIALWSLVALAI) form a helical membrane-spanning segment. The short motif at 134–136 (ERY) is the 'Ionic lock' involved in activated form stabilization element. Residues 134-152 (ERYIVVCKPMSNFRFGENH) are Cytoplasmic-facing. The chain crosses the membrane as a helical span at residues 153–173 (AMMGVAFTWIMALACAVPPLF). At 174–202 (GWSRYIPEGMQCSCGVDYYTLKPEINNES) the chain is on the extracellular side. The chain crosses the membrane as a helical span at residues 203–224 (FVIYMFVVHFLIPLIIITFCYG). Over 225 to 252 (RLVCTVKEAAAQQQESATTQKAEKEVTR) the chain is Cytoplasmic. Residues 253–274 (MVIIMVIFFLICWVPYAYVAFY) traverse the membrane as a helical segment. The Extracellular segment spans residues 275–286 (IFCNQGSEFGPI). Residues 287-308 (FMTVPAFFAKSSAIYNPVIYIM) traverse the membrane as a helical segment. The residue at position 296 (lysine 296) is an N6-(retinylidene)lysine. Over 309-354 (LNKQFRNCMITTLCCGKNPFGDDDASSAATSKTEATSVSTSQVSPA) the chain is Cytoplasmic. S-palmitoyl cysteine attachment occurs at residues cysteine 322 and cysteine 323. Residues 332 to 354 (DASSAATSKTEATSVSTSQVSPA) are disordered. Residues 334–354 (SSAATSKTEATSVSTSQVSPA) are compositionally biased toward low complexity.

Belongs to the G-protein coupled receptor 1 family. Opsin subfamily. In terms of processing, contains one covalently linked retinal chromophore. Upon light absorption, the covalently bound 11-cis-retinal is converted to all-trans-retinal. After hydrolysis of the Schiff base and release of the covalently bound all-trans-retinal, active rhodopsin is regenerated by binding of a fresh molecule of 11-cis-retinal.

The protein resides in the membrane. Its subcellular location is the cell projection. The protein localises to the cilium. It localises to the photoreceptor outer segment. In terms of biological role, photoreceptor required for image-forming vision at low light intensity. Required for photoreceptor cell viability after birth. Light-induced isomerization of 11-cis to all-trans retinal triggers a conformational change that activates signaling via G-proteins. Subsequent receptor phosphorylation mediates displacement of the bound G-protein alpha subunit by arrestin and terminates signaling. In Rana temporaria (European common frog), this protein is Rhodopsin (RHO).